The following is a 643-amino-acid chain: ATP-dependent RNA helicase DeaD (643 aa).

The Q motif signature appears at 6–34; sequence TTFADLGLKAPILEALTDLGYEKPSPIQA. Residues 37 to 208 form the Helicase ATP-binding domain; sequence IPHLLDGRDV…RRFMKEPQEV (172 aa). 50 to 57 provides a ligand contact to ATP; sequence AQTGSGKT. Residues 156–159 carry the DEAD box motif; it reads DEAD. The Helicase C-terminal domain occupies 232–379; that stretch reads KNEALVRFLE…EVELPNAELL (148 aa). Disordered regions lie at residues 440 to 482 and 557 to 643; these read VPPV…KRER and MNMQ…GGDA. Composition is skewed to basic and acidic residues over residues 448 to 482 and 567 to 643; these read PRRE…KRER and PRTE…GGDA.

It belongs to the DEAD box helicase family. DeaD/CsdA subfamily.

It is found in the cytoplasm. The enzyme catalyses ATP + H2O = ADP + phosphate + H(+). Its function is as follows. DEAD-box RNA helicase involved in various cellular processes at low temperature, including ribosome biogenesis, mRNA degradation and translation initiation. This Klebsiella pneumoniae protein is ATP-dependent RNA helicase DeaD.